A 526-amino-acid chain; its full sequence is Hyaluronidase-5 (526 aa).

Residues 1–35 form the signal peptide; sequence MRVLYFKHSFFRSLLKSNGLPQTLLVFLLIPCYLT. 5 disulfides stabilise this stretch: Cys-60–Cys-351, Cys-223–Cys-237, Cys-376–Cys-387, Cys-381–Cys-435, and Cys-437–Cys-443. The Proton donor role is filled by Glu-147. N-linked (GlcNAc...) asparagine glycans are attached at residues Asn-165 and Asn-179.

This sequence belongs to the glycosyl hydrolase 56 family. In terms of tissue distribution, expressed in testis, epididymal sperm and epididymides (at protein level). Expressed at highest levels in testis with lesser amounts in epididymal sperm.

The protein resides in the cell membrane. It is found in the cytoplasmic vesicle. It localises to the secretory vesicle. The protein localises to the acrosome membrane. Its subcellular location is the secreted. It carries out the reaction Random hydrolysis of (1-&gt;4)-linkages between N-acetyl-beta-D-glucosamine and D-glucuronate residues in hyaluronate.. In terms of biological role, catalyzes the hydrolysis of hyaluronan into smaller oligosaccharide fragments. Does not appear to be essential for fertilization. The protein is Hyaluronidase-5 of Mus musculus (Mouse).